Reading from the N-terminus, the 505-residue chain is uncharacterized protein (505 aa).

His-431 serves as the catalytic Proton acceptor.

Belongs to the GMC oxidoreductase family. The cofactor is FAD.

This is an uncharacterized protein from Sinorhizobium fredii (strain NBRC 101917 / NGR234).